Here is a 107-residue protein sequence, read N- to C-terminus: Thioredoxin (107 aa).

In terms of domain architecture, Thioredoxin spans 2-107; it reads SVSQVTDASF…LESTLNKYIS (106 aa). Active-site nucleophile residues include cysteine 31 and cysteine 34. A disulfide bridge connects residues cysteine 31 and cysteine 34.

The protein belongs to the thioredoxin family.

Its subcellular location is the plastid. It is found in the chloroplast. Functionally, participates in various redox reactions through the reversible oxidation of its active center dithiol to a disulfide and catalyzes dithiol-disulfide exchange reactions. The protein is Thioredoxin (trxA) of Porphyra purpurea (Red seaweed).